The following is a 298-amino-acid chain: ADP-ribosylation factor GTPase-activating protein effector protein 2 (298 aa).

Serine 2 carries the N-acetylserine modification. Residues 8 to 130 (KKALSALLRD…KWIGDLSSIE (123 aa)) form the Arf-GAP domain. The C4-type zinc finger occupies 23–47 (CADCKAQLHPRWASWSLGVFICIKC). Positions 137–180 (EPVLHKPSANHSLPASNARLDQSSNSLQKTQTQPPSHLLSTSRS) are disordered. The span at 145 to 171 (ANHSLPASNARLDQSSNSLQKTQTQPP) shows a compositional bias: polar residues. Serine 180, serine 183, and serine 207 each carry phosphoserine.

The protein localises to the cytoplasm. It is found in the golgi apparatus. Its function is as follows. GTPase-activating protein for the ADP ribosylation factor family. This Saccharomyces cerevisiae (strain ATCC 204508 / S288c) (Baker's yeast) protein is ADP-ribosylation factor GTPase-activating protein effector protein 2 (AGE2).